The following is a 228-amino-acid chain: MCDNDMADIQSKLSSFCEEIRALALKEGYNLEGDKSPSSKPYFMSWPKEIDVNHPNFAFFTKLQFQYDKSLETILNSCYLQELQLDPTRIIETLQQHFNNSILRYADIENISDVKDESPMSFDTEHECTDTSEDISDKSEISSTNSDNPIQNCYPTYKRSFIKHESRGILEKIFKVKQCPNTSERLYIAQKLDLTPSQVRIWFTNKRMRAKKHTTGKGTKRKSKKYPS.

Residues 120–140 (MSFDTEHECTDTSEDISDKSE) are compositionally biased toward basic and acidic residues. Residues 120-149 (MSFDTEHECTDTSEDISDKSEISSTNSDNP) form a disordered region. The homeobox DNA-binding region spans 155–214 (PTYKRSFIKHESRGILEKIFKVKQCPNTSERLYIAQKLDLTPSQVRIWFTNKRMRAKKHT).

The protein belongs to the MATA1 family. As to quaternary structure, forms a heterodimer with ALPHA2.

Its subcellular location is the nucleus. In terms of biological role, mating type proteins are sequence specific DNA-binding proteins that act as master switches in yeast differentiation by controlling gene expression in a cell type-specific fashion. Transcriptional corepressor that acts in conjunction with ALPHA2 to repress transcription of haploid-specific genes. This is Mating-type protein A1 (MATA1) from Kluyveromyces lactis (strain ATCC 8585 / CBS 2359 / DSM 70799 / NBRC 1267 / NRRL Y-1140 / WM37) (Yeast).